The chain runs to 340 residues: MTLTVAVDAMGGDVGVGVTVPAAVDFLDRHPDVRLILVGQPDAIEDELTRLARPRSGRLTVHAASQVVAMDDSPQSALKNKKDSSMRVAINLVKEGQAQAAVSAGNTGALMATARFVLKTIPGIDRPAIAKLLPTMKGESCVLDLGANVDCTPEQLLQFGIMGATLIEGVTGRNNPTVGLLNIGSEEIKGNDTVKQAAELLRNSSLNFYGNVEGNDIYLGTVDVIVTDGFTGNVALKTSEGLAHMVGALLKQEFGRNLFTRLSALAALPVLKHFKKRLDSPALQWRQSGRPARHRGQEPRRHRQPRFWLCHRRGRRRSPRQRNRTHPGTGQPPAGCAGAR.

A disordered region spans residues 285–340 (WRQSGRPARHRGQEPRRHRQPRFWLCHRRGRRRSPRQRNRTHPGTGQPPAGCAGAR). Over residues 300 to 325 (RRHRQPRFWLCHRRGRRRSPRQRNRT) the composition is skewed to basic residues.

Belongs to the PlsX family. As to quaternary structure, homodimer. Probably interacts with PlsY.

It is found in the cytoplasm. The catalysed reaction is a fatty acyl-[ACP] + phosphate = an acyl phosphate + holo-[ACP]. Its pathway is lipid metabolism; phospholipid metabolism. Functionally, catalyzes the reversible formation of acyl-phosphate (acyl-PO(4)) from acyl-[acyl-carrier-protein] (acyl-ACP). This enzyme utilizes acyl-ACP as fatty acyl donor, but not acyl-CoA. The sequence is that of Phosphate acyltransferase from Laribacter hongkongensis (strain HLHK9).